Here is a 372-residue protein sequence, read N- to C-terminus: Uroporphyrinogen decarboxylase (372 aa).

Substrate is bound by residues 35–39 (RQAGR), Asp85, Tyr166, Ser221, and His342.

The protein belongs to the uroporphyrinogen decarboxylase family. Homodimer.

Its subcellular location is the cytoplasm. The enzyme catalyses uroporphyrinogen III + 4 H(+) = coproporphyrinogen III + 4 CO2. It functions in the pathway porphyrin-containing compound metabolism; protoporphyrin-IX biosynthesis; coproporphyrinogen-III from 5-aminolevulinate: step 4/4. Functionally, catalyzes the decarboxylation of four acetate groups of uroporphyrinogen-III to yield coproporphyrinogen-III. The protein is Uroporphyrinogen decarboxylase of Methylibium petroleiphilum (strain ATCC BAA-1232 / LMG 22953 / PM1).